Reading from the N-terminus, the 123-residue chain is Small ribosomal subunit protein uS12 (123 aa).

The residue at position 89 (D89) is a 3-methylthioaspartic acid. The disordered stretch occupies residues 104 to 123 (TAGVQDRRQGRSKYGAKRPK). Residues 113–123 (GRSKYGAKRPK) are compositionally biased toward basic residues.

Belongs to the universal ribosomal protein uS12 family. As to quaternary structure, part of the 30S ribosomal subunit. Contacts proteins S8 and S17. May interact with IF1 in the 30S initiation complex.

With S4 and S5 plays an important role in translational accuracy. Its function is as follows. Interacts with and stabilizes bases of the 16S rRNA that are involved in tRNA selection in the A site and with the mRNA backbone. Located at the interface of the 30S and 50S subunits, it traverses the body of the 30S subunit contacting proteins on the other side and probably holding the rRNA structure together. The combined cluster of proteins S8, S12 and S17 appears to hold together the shoulder and platform of the 30S subunit. In Oleidesulfovibrio alaskensis (strain ATCC BAA-1058 / DSM 17464 / G20) (Desulfovibrio alaskensis), this protein is Small ribosomal subunit protein uS12.